The primary structure comprises 155 residues: Ribosomal RNA large subunit methyltransferase H (155 aa).

S-adenosyl-L-methionine-binding positions include leucine 72, glycine 103, and 122–127; that span reads LSDLTL.

The protein belongs to the RNA methyltransferase RlmH family. Homodimer.

It localises to the cytoplasm. The enzyme catalyses pseudouridine(1915) in 23S rRNA + S-adenosyl-L-methionine = N(3)-methylpseudouridine(1915) in 23S rRNA + S-adenosyl-L-homocysteine + H(+). Its function is as follows. Specifically methylates the pseudouridine at position 1915 (m3Psi1915) in 23S rRNA. This chain is Ribosomal RNA large subunit methyltransferase H, found in Paracidovorax citrulli (strain AAC00-1) (Acidovorax citrulli).